A 607-amino-acid chain; its full sequence is Rap1 GTPase-GDP dissociation stimulator 1 (607 aa).

The Nuclear export signal (NES) motif lies at 4-13 (LSDTLKKLKI). ARM repeat units follow at residues 89-131 (GLIS…DQAG) and 170-211 (DSLQ…NLAE). The interval 122–170 (EGRSAVDQAGGAQIVIDHLRSLCSITDPANEKLLTVFCGMLMNYSNEND) is prevents binding to prenylated RHOA. Position 230 is an N6-acetyllysine (K230). The interval 239-255 (DKREMIFEVLAPLAEND) is interacts with polybasic regions in GTPases. ARM repeat units lie at residues 347–390 (DANC…NLAI), 391–431 (PVIN…MLID), and 479–519 (SKDV…LIAA). The interval 379–428 (HAALSALRNLAIPVINKAKMLSAGVTEAVLKFLKSEMPPVQFKLLGTLRM) is critical for catalytic activity.

As to quaternary structure, interacts with RABL3. Interacts with RHOT1. Interacts with unprenylated RHOA; the interaction is direct. Interacts with RAP1A. Interacts with KRAS. Interacts with RAC1. Interacts with RAP1B. Preferentially interacts with unprenylated GTPases that will become geranylgeranylated. May also interact with prenylated GTPases. In terms of assembly, interacts with prenylated RHOA; the interaction is direct and in a 1:1 stoichiometry. Interacts with RAP1A. Interacts with KRAS. Interacts with RAC1. Interacts with RAP1B. Preferentially interacts with prenylated GTPases. Forms covalent cross-links mediated by transglutaminase TGM2, between a glutamine and the epsilon-amino group of a lysine residue, forming homopolymers and heteropolymers.

The protein localises to the cytoplasm. It is found in the cytosol. The protein resides in the endoplasmic reticulum. It localises to the mitochondrion. Its subcellular location is the nucleus. In terms of biological role, acts as a GEF (guanine nucleotide exchange factor) for the Rho family of small GTP-binding proteins (G proteins) that stimulates the dissociation of GDP to enable subsequent binding of GTP. Additionally, appears to chaperone the processing and/or trafficking of small GTPases containing a C-terminal polybasic region independently of GEF activity. Targets include RAP1A/RAP1B, RHOA, RHOB, RHOC, RAC1 and KRAS. Regulates mitochondrial dynamics by controlling RHOT function to promote mitochondrial fission during high calcium conditions. Able to promote the Ca(2+) release from the endoplasmic reticulum via both inositol trisphosphate (Ins3P) and ryanodine sensitive receptors leading to a enhanced mitochondrial Ca(2+) uptake. Functionally, acts as a GEF (guanine nucleotide exchange factor) for unprenylated RHOA. Chaperones the entry and passage of small GTPases through the prenylation pathway. Recognizes the last amino acid in the GTPase C-terminal CAAX motif with a preference for 'Leu' over 'Met', indicating involvement in the geranylgeranylation pathway. Its function is as follows. Acts as a GEF (guanine nucleotide exchange factor) for prenylated RHOA. Acts as a GEF for RHOC. Chaperones the downstream trafficking and/or processing of small newly prenylated GTPases. Escorts RAC1 to the nucleus. The protein is Rap1 GTPase-GDP dissociation stimulator 1 of Homo sapiens (Human).